The following is a 427-amino-acid chain: Heterogeneous nuclear ribonucleoprotein K (427 aa).

Residues 1-34 are disordered; it reads METEQQEETFTNTETNGKRPAEDMEEEQAFKRSR. The segment covering 16–34 has biased composition (basic and acidic residues); it reads NGKRPAEDMEEEQAFKRSR. KH domains lie at 39–101 and 117–182; these read MVEL…LKKI and DCEL…IKII. A run of 2 repeats spans residues 51-73 and 56-59. The segment at 51 to 385 is 2 X 22 AA approximate repeats; sequence AGAVIGKGGK…QIRHESGASI (335 aa). The segment at 56 to 371 is 5 X 4 AA repeats of G-X-G-G; sequence GKGGKNIKAL…LAGSIIGKGG (316 aa). Residues 209 to 246 form an RNA-binding RGG-box region; the sequence is YGGFTMMFDDRRGRPVGFPMRGRGGFDRMPPNRGGRPM. Repeat copies occupy residues 218 to 223, 230 to 233, and 240 to 243. Positions 218–302 are 2 X 6 AA approximate repeats; the sequence is DRRGRPVGFP…LMSYDRRGRP (85 aa). Positions 221–305 are disordered; it reads GRPVGFPMRG…YDRRGRPGDR (85 aa). The segment covering 249 to 258 has biased composition (basic and acidic residues); that stretch reads SRRDYDDMSP. Repeat copies occupy residues 268-271, 297-302, 363-385, and 368-371. Over residues 295-305 the composition is skewed to basic and acidic residues; the sequence is SYDRRGRPGDR. Positions 351–415 constitute a KH 3 domain; it reads IITTQVTIPK…DQIQNAQYLL (65 aa).

Its subcellular location is the cytoplasm. It localises to the nucleus. It is found in the nucleoplasm. Functionally, one of the major pre-mRNA-binding proteins. Binds tenaciously to poly(C) sequences. Likely to play a role in the nuclear metabolism of hnRNAs, particularly for pre-mRNAs that contain cytidine-rich sequences. Can also bind poly(C) single-stranded DNA. May play an important role in p53/TP53 response to DNA damage, acting at the level of both transcription activation and repression. As part of a ribonucleoprotein complex, may negatively regulate the transcription of genes involved in neuronal differentiation. This chain is Heterogeneous nuclear ribonucleoprotein K (HNRNPK), found in Gallus gallus (Chicken).